The following is a 259-amino-acid chain: MNITDIRTKSPLVLTYANFVTPQFVANVVNVVGASPLMSRELAEFKELAGIANAVIINTGTLQKVEINDIIKLSQEAYQLGKPVVLDPVAVSVPFRSKAITQFLASGHVDVIRGNAAEIAWFADIDFASQGIDATGKGDVIEIAQRAAKKTGAVIALSGACDVVSDGQYTQTLDINVEQLSSIVGTGDALSSLIGAFIADGLKVPNVMNAMATFKLAGQKAATKTNQPGSFTNQLLDELFVIDNIDVQNFVKESVLNHG.

M38 serves as a coordination point for substrate. Positions 113 and 158 each coordinate ATP. Substrate is bound at residue G185.

This sequence belongs to the Thz kinase family. Requires Mg(2+) as cofactor.

It catalyses the reaction 5-(2-hydroxyethyl)-4-methylthiazole + ATP = 4-methyl-5-(2-phosphooxyethyl)-thiazole + ADP + H(+). It functions in the pathway cofactor biosynthesis; thiamine diphosphate biosynthesis; 4-methyl-5-(2-phosphoethyl)-thiazole from 5-(2-hydroxyethyl)-4-methylthiazole: step 1/1. Catalyzes the phosphorylation of the hydroxyl group of 4-methyl-5-beta-hydroxyethylthiazole (THZ). The chain is Hydroxyethylthiazole kinase 1 from Leuconostoc mesenteroides subsp. mesenteroides (strain ATCC 8293 / DSM 20343 / BCRC 11652 / CCM 1803 / JCM 6124 / NCDO 523 / NBRC 100496 / NCIMB 8023 / NCTC 12954 / NRRL B-1118 / 37Y).